The chain runs to 753 residues: 5-methyltetrahydropteroyltriglutamate--homocysteine methyltransferase (753 aa).

Residues arginine 17–lysine 20 and lysine 117 contribute to the 5-methyltetrahydropteroyltri-L-glutamate site. Residues isoleucine 431–serine 433 and glutamate 484 contribute to the L-homocysteine site. L-methionine is bound by residues isoleucine 431–serine 433 and glutamate 484. 5-methyltetrahydropteroyltri-L-glutamate contacts are provided by residues arginine 515–cysteine 516 and tryptophan 561. Aspartate 599 is a binding site for L-homocysteine. Aspartate 599 is an L-methionine binding site. Glutamate 605 contacts 5-methyltetrahydropteroyltri-L-glutamate. Positions 641, 643, and 665 each coordinate Zn(2+). Histidine 694 (proton donor) is an active-site residue. Zn(2+) is bound at residue cysteine 726.

This sequence belongs to the vitamin-B12 independent methionine synthase family. The cofactor is Zn(2+).

The catalysed reaction is 5-methyltetrahydropteroyltri-L-glutamate + L-homocysteine = tetrahydropteroyltri-L-glutamate + L-methionine. Its pathway is amino-acid biosynthesis; L-methionine biosynthesis via de novo pathway; L-methionine from L-homocysteine (MetE route): step 1/1. Catalyzes the transfer of a methyl group from 5-methyltetrahydrofolate to homocysteine resulting in methionine formation. The polypeptide is 5-methyltetrahydropteroyltriglutamate--homocysteine methyltransferase (Klebsiella pneumoniae (strain 342)).